The chain runs to 328 residues: MIFSILEHILTHISFSVVSIVMTIYFLTLLVNLDESIGFYYSSDKGIIITFFSITGFLFTRWIFSGHFPLSNLYESLIFLSWAFSIIHMISFFNKKRKKNLNAITAPSAIFIQGFATSGLLNKMPQSAILVPALQSQWLMMHVSMMVLGYGALLCGSLLSIALLVITFRKVGPFFYKKNINRKKFLTEFFSFDVLYYINERNSILLKQNINLSFSRNYYRYQLIEQLDYWSYRIISLGFLFLTIGILSGAVWANETWGSYWNWDPKETWAFITWTIFAIYLHIKTKQNGRGINSAIVASIGFLVIWICYFGVNLLGIGLHSYGSFTSN.

8 consecutive transmembrane segments (helical) span residues 13–33, 46–66, 73–93, 101–121, 146–166, 234–254, 263–283, and 295–315; these read ISFS…LVNL, GIII…IFSG, LYES…ISFF, LNAI…SGLL, MVLG…LLVI, IISL…VWAN, WDPK…YLHI, and AIVA…VNLL.

Belongs to the CcmF/CycK/Ccl1/NrfE/CcsA family. In terms of assembly, may interact with Ccs1.

It localises to the plastid. The protein resides in the chloroplast thylakoid membrane. Functionally, required during biogenesis of c-type cytochromes (cytochrome c6 and cytochrome f) at the step of heme attachment. The sequence is that of Cytochrome c biogenesis protein CcsA from Aethionema grandiflorum (Persian stone-cress).